The primary structure comprises 65 residues: MAKKVKGARVTIHLECIDCNNQQDSGRKLASFSRYTTQKNRYNTPTRLELKKFCPSCSKHTIHIE.

It belongs to the bacterial ribosomal protein bL33 family.

It is found in the plastid. Its subcellular location is the chloroplast. This Psilotum nudum (Whisk fern) protein is Large ribosomal subunit protein bL33c.